The sequence spans 82 residues: uncharacterized protein (82 aa).

Residues 55 to 64 (DQNTAPSTPS) are compositionally biased toward polar residues. A disordered region spans residues 55-82 (DQNTAPSTPSKILPKRLPSQSNLNNNNN).

This is an uncharacterized protein from Dictyostelium discoideum (Social amoeba).